The following is a 336-amino-acid chain: tRNA-dihydrouridine(20/20a) synthase (336 aa).

Residues 24–26 (PMM) and Q77 each bind FMN. C107 serves as the catalytic Proton donor. FMN contacts are provided by residues K146, H178, 218–220 (NGG), and 240–241 (GR).

Belongs to the Dus family. DusA subfamily. FMN is required as a cofactor.

It catalyses the reaction 5,6-dihydrouridine(20) in tRNA + NADP(+) = uridine(20) in tRNA + NADPH + H(+). It carries out the reaction 5,6-dihydrouridine(20) in tRNA + NAD(+) = uridine(20) in tRNA + NADH + H(+). The catalysed reaction is 5,6-dihydrouridine(20a) in tRNA + NADP(+) = uridine(20a) in tRNA + NADPH + H(+). The enzyme catalyses 5,6-dihydrouridine(20a) in tRNA + NAD(+) = uridine(20a) in tRNA + NADH + H(+). In terms of biological role, catalyzes the synthesis of 5,6-dihydrouridine (D), a modified base found in the D-loop of most tRNAs, via the reduction of the C5-C6 double bond in target uridines. Specifically modifies U20 and U20a in tRNAs. This Pseudomonas putida (strain ATCC 47054 / DSM 6125 / CFBP 8728 / NCIMB 11950 / KT2440) protein is tRNA-dihydrouridine(20/20a) synthase.